We begin with the raw amino-acid sequence, 208 residues long: Thymidylate kinase (208 aa).

Position 13 to 20 (13 to 20) interacts with ATP; sequence GLEGAGKS.

The protein belongs to the thymidylate kinase family.

The enzyme catalyses dTMP + ATP = dTDP + ADP. Phosphorylation of dTMP to form dTDP in both de novo and salvage pathways of dTTP synthesis. This Shewanella amazonensis (strain ATCC BAA-1098 / SB2B) protein is Thymidylate kinase.